We begin with the raw amino-acid sequence, 192 residues long: Putative acetyltransferase SH0499 (192 aa).

It belongs to the transferase hexapeptide repeat family.

The protein is Putative acetyltransferase SH0499 of Staphylococcus haemolyticus (strain JCSC1435).